A 227-amino-acid polypeptide reads, in one-letter code: 7-cyano-7-deazaguanine synthase (227 aa).

7–17 (LSGGMDSLVTT) contacts ATP. 4 residues coordinate Zn(2+): C187, C195, C198, and C201.

It belongs to the QueC family. Zn(2+) serves as cofactor.

The catalysed reaction is 7-carboxy-7-deazaguanine + NH4(+) + ATP = 7-cyano-7-deazaguanine + ADP + phosphate + H2O + H(+). The protein operates within purine metabolism; 7-cyano-7-deazaguanine biosynthesis. Its function is as follows. Catalyzes the ATP-dependent conversion of 7-carboxy-7-deazaguanine (CDG) to 7-cyano-7-deazaguanine (preQ(0)). This is 7-cyano-7-deazaguanine synthase from Chlorobium luteolum (strain DSM 273 / BCRC 81028 / 2530) (Pelodictyon luteolum).